Reading from the N-terminus, the 408-residue chain is Bifunctional polynucleotide phosphatase/kinase (408 aa).

Positions 1–38 are disordered; the sequence is MSSKKRKSPPQESLTSYFEKSSKSSKKYGSQNKDSDSS. Ser8 carries the post-translational modification Phosphoserine. Polar residues-rich tracts occupy residues 10–19 and 28–38; these read PQESLTSYFE and YGSQNKDSDSS. Position 263-270 (263-270) interacts with ATP; it reads GFPSSGKS.

It in the N-terminal section; belongs to the DNA 3' phosphatase family.

It is found in the nucleus. It catalyses the reaction a 3'end (2'-deoxyribonucleotide 3'-phosphate)-DNA + H2O = a 3'-end 2'-deoxyribonucleotide-DNA + phosphate. The catalysed reaction is a 5'-end dephospho-2'-deoxyribonucleoside-DNA + ATP = a 5'-end 5'-phospho-2'-deoxyribonucleoside-DNA + ADP + H(+). Its function is as follows. Catalyzes the phosphorylation of DNA at 5'-hydroxyl termini and can dephosphorylate its 3'-phosphate termini. Has a role in the repair of breaks in single-stranded DNA. The protein is Bifunctional polynucleotide phosphatase/kinase (pnk1) of Schizosaccharomyces pombe (strain 972 / ATCC 24843) (Fission yeast).